Reading from the N-terminus, the 780-residue chain is ATP-dependent 6-phosphofructokinase, liver type (780 aa).

Ala-2 carries the post-translational modification N-acetylalanine. The segment at 2 to 390 (ATVDLEKLRM…NWKIYKLLAH (389 aa)) is N-terminal catalytic PFK domain 1. ATP is bound by residues Gly-25, 88–89 (RC), and 118–121 (GDGS). A Mg(2+)-binding site is contributed by Asp-119. Residues 164 to 166 (SID), Arg-201, 208 to 210 (MGR), Glu-264, Arg-292, and 298 to 301 (HVQR) each bind substrate. The active-site Proton acceptor is the Asp-166. At Ser-377 the chain carries Phosphoserine. The interdomain linker stretch occupies residues 391-400 (QKVSKEKSNF). The segment at 401–780 (SLAILNVGAP…RRTLSIDKGF (380 aa)) is C-terminal regulatory PFK domain 2. Beta-D-fructose 2,6-bisphosphate is bound by residues Arg-470, 527 to 531 (TISNN), Arg-565, 572 to 574 (MGG), and Glu-628. Ser-529 carries O-linked (GlcNAc) serine glycosylation. Tyr-640 bears the Phosphotyrosine mark. Beta-D-fructose 2,6-bisphosphate is bound by residues Arg-654, 660 to 663 (HLQQ), and Arg-734. Ser-775 is subject to Phosphoserine.

The protein belongs to the phosphofructokinase type A (PFKA) family. ATP-dependent PFK group I subfamily. Eukaryotic two domain clade 'E' sub-subfamily. In terms of assembly, homo- and heterotetramers. Phosphofructokinase (PFK) enzyme functions as a tetramer composed of different combinations of 3 types of subunits, called PFKM (M), PFKL (L) and PFKP (P). The composition of the PFK tetramer differs according to the tissue type it is present in. The kinetic and regulatory properties of the tetrameric enzyme are dependent on the subunit composition, hence can vary across tissues. Mg(2+) serves as cofactor. In terms of processing, glcNAcylation at Ser-529 by OGT decreases enzyme activity, leading to redirect glucose flux through the oxidative pentose phosphate pathway. Glycosylation is stimulated by both hypoxia and glucose deprivation.

The protein localises to the cytoplasm. It catalyses the reaction beta-D-fructose 6-phosphate + ATP = beta-D-fructose 1,6-bisphosphate + ADP + H(+). Its pathway is carbohydrate degradation; glycolysis; D-glyceraldehyde 3-phosphate and glycerone phosphate from D-glucose: step 3/4. With respect to regulation, allosterically activated by ADP, AMP, or fructose 2,6-bisphosphate, and allosterically inhibited by ATP or citrate. GlcNAcylation by OGT overcomes allosteric regulation. Functionally, catalyzes the phosphorylation of D-fructose 6-phosphate to fructose 1,6-bisphosphate by ATP, the first committing step of glycolysis. Negatively regulates the phagocyte oxidative burst in response to bacterial infection by controlling cellular NADPH biosynthesis and NADPH oxidase-derived reactive oxygen species. Upon macrophage activation, drives the metabolic switch toward glycolysis, thus preventing glucose turnover that produces NADPH via pentose phosphate pathway. The sequence is that of ATP-dependent 6-phosphofructokinase, liver type from Mus musculus (Mouse).